Consider the following 126-residue polypeptide: uncharacterized protein (126 aa).

Residues 83–126 are disordered; that stretch reads VPPPLDRSHESPEEFFPPQNRNRGGGPKAQIQRHPPEALEKTTH. Over residues 116 to 126 the composition is skewed to basic and acidic residues; that stretch reads HPPEALEKTTH.

This is an uncharacterized protein from Galliformes (FAdV-1).